Here is a 431-residue protein sequence, read N- to C-terminus: Glutamate-1-semialdehyde 2,1-aminomutase (431 aa).

Lys-265 carries the post-translational modification N6-(pyridoxal phosphate)lysine.

This sequence belongs to the class-III pyridoxal-phosphate-dependent aminotransferase family. HemL subfamily. Homodimer. Pyridoxal 5'-phosphate is required as a cofactor.

It localises to the cytoplasm. The enzyme catalyses (S)-4-amino-5-oxopentanoate = 5-aminolevulinate. It functions in the pathway porphyrin-containing compound metabolism; protoporphyrin-IX biosynthesis; 5-aminolevulinate from L-glutamyl-tRNA(Glu): step 2/2. The chain is Glutamate-1-semialdehyde 2,1-aminomutase from Vibrio vulnificus (strain CMCP6).